The following is a 500-amino-acid chain: NAD(P)H-quinone oxidoreductase chain 4, chloroplastic (500 aa).

The next 14 helical transmembrane spans lie at 4 to 24 (FPWL…MLFL), 35 to 55 (YTIC…CYNF), 87 to 107 (IGTI…AFPV), 113 to 130 (LFHF…GSFS), 134 to 154 (LLLF…LLSM), 167 to 187 (FILY…GISL), 211 to 231 (IILY…IPLH), 242 to 262 (HYST…YGLV), 272 to 292 (AHSM…IYAA), 305 to 325 (IAYS…SITD), 330 to 350 (GAIL…FLAG), 386 to 406 (LALP…GIIT), 416 to 436 (ILII…LLSM), and 466 to 486 (ISSL…LALA).

The protein belongs to the complex I subunit 4 family.

The protein resides in the plastid. The protein localises to the chloroplast thylakoid membrane. It carries out the reaction a plastoquinone + NADH + (n+1) H(+)(in) = a plastoquinol + NAD(+) + n H(+)(out). The enzyme catalyses a plastoquinone + NADPH + (n+1) H(+)(in) = a plastoquinol + NADP(+) + n H(+)(out). The chain is NAD(P)H-quinone oxidoreductase chain 4, chloroplastic from Aethionema grandiflorum (Persian stone-cress).